Consider the following 700-residue polypeptide: Auxin response factor 18 (700 aa).

A DNA-binding region (TF-B3) is located at residues 128–230 (FAKTLTQSDA…DLCVGIRRAK (103 aa)). Disordered stretches follow at residues 234–254 (VGGP…AAGG) and 560–595 (VKKS…DNLS). Positions 239–250 (FLPPPPPPPPTP) are enriched in pro residues. Residues 565 to 594 (SDGNAENTVNKSNSDVSSPRSNQNGTTDNL) show a composition bias toward polar residues. A PB1 domain is found at 614-697 (TGHCKVFMQS…NILTDTSGDN (84 aa)).

It belongs to the ARF family. Homodimers and heterodimers. Expressed in roots, culms, leaves and young panicles.

It is found in the nucleus. Auxin response factors (ARFs) are transcriptional factors that bind specifically to the DNA sequence 5'-TGTCTC-3' found in the auxin-responsive promoter elements (AuxREs). The polypeptide is Auxin response factor 18 (ARF18) (Oryza sativa subsp. japonica (Rice)).